We begin with the raw amino-acid sequence, 330 residues long: Type II restriction enzyme Cfr9I (330 aa).

The protein belongs to the XcyI type II restriction endonuclease family. Mg(2+) serves as cofactor.

It carries out the reaction Endonucleolytic cleavage of DNA to give specific double-stranded fragments with terminal 5'-phosphates.. An E and P subtype restriction enzyme that recognizes the double-stranded sequence 5'-CCCGGG-3' and cleaves after C-1. The sequence is that of Type II restriction enzyme Cfr9I (cfr9IR) from Citrobacter freundii.